The following is a 111-amino-acid chain: Iron-sulfur cluster assembly protein CyaY (111 aa).

The protein belongs to the frataxin family.

Functionally, involved in iron-sulfur (Fe-S) cluster assembly. May act as a regulator of Fe-S biogenesis. The polypeptide is Iron-sulfur cluster assembly protein CyaY (Cupriavidus metallidurans (strain ATCC 43123 / DSM 2839 / NBRC 102507 / CH34) (Ralstonia metallidurans)).